Here is a 396-residue protein sequence, read N- to C-terminus: Probable arginine kinase F46H5.3 (396 aa).

Positions 47-129 (KIEEGYAKLQ…FDPLIQDYHN (83 aa)) constitute a Phosphagen kinase N-terminal domain. Residue 102-106 (GVGVY) coordinates substrate. In terms of domain architecture, Phosphagen kinase C-terminal spans 159 to 396 (FINSTRIRCG…AHLIALEKAA (238 aa)). ATP is bound by residues 162–166 (STRIR) and H226. E266 contributes to the substrate binding site. R270 serves as a coordination point for ATP. Substrate is bound at residue C312. Residues 321 to 325 (RASVH), 349 to 354 (RGIHGE), and D364 contribute to the ATP site. Position 354 (E354) interacts with substrate.

The protein belongs to the ATP:guanido phosphotransferase family.

It catalyses the reaction L-arginine + ATP = N(omega)-phospho-L-arginine + ADP + H(+). The polypeptide is Probable arginine kinase F46H5.3 (Caenorhabditis elegans).